The following is a 481-amino-acid chain: MGVFRFISISLAAVSAANAAQILSMPHAQTVPNSYIVMMKDDTSDDDFNHHQSWLQSTHTHNITRRATVQNAGMRHKYNFHKMKGYSGVFDDETIKDIAKDPKVMFVEPDTIISVHGKVDQNNVPSWGLARISSSKPGTQDYTYDSSAGEGITVYSVDTGVDINHEDFEGRAIWGSNQVNDGDDNDRSGHGTHTSGTMVGKEFGIAKKAKLVAVKVLGNDGSGPTSGIVAGINWCVEHARQNGGTNKAVMNMSLGGGSSSALNRAAAQAVEQGMFLSVAAGNDNTDARSSSPASEPSVCTVGASAEDDSRSSFSNWGPSLDLFAPGSNIISARPGGGSQSMSGTSMAAPHVAGLAAYLMALEGISGGAVCDRLKQLGSASISDVGPGTPTNVLINNGGAKGDGKSPKPSPKPSHPSEPQQPTEPQQPAPGEPSTPAPAPMPPTPQHPHTPFPGGDDFDFDGFWKKYFGGEHWRKMFSSFFN.

An N-terminal signal peptide occupies residues 1-19; that stretch reads MGVFRFISISLAAVSAANA. Positions 20–116 are excised as a propeptide; sequence AQILSMPHAQ…VEPDTIISVH (97 aa). Residues 34-115 enclose the Inhibitor I9 domain; sequence SYIVMMKDDT…FVEPDTIISV (82 aa). The Peptidase S8 domain maps to 126-400; that stretch reads SWGLARISSS…NVLINNGGAK (275 aa). Residues Asp-158 and His-190 each act as charge relay system in the active site. The tract at residues 175 to 198 is disordered; the sequence is GSNQVNDGDDNDRSGHGTHTSGTM. Asn-251 carries N-linked (GlcNAc...) asparagine glycosylation. Positions 281–312 are disordered; sequence GNDNTDARSSSPASEPSVCTVGASAEDDSRSS. Polar residues predominate over residues 282-294; the sequence is NDNTDARSSSPAS. The Charge relay system role is filled by Ser-345. Positions 379-455 are disordered; that stretch reads ASISDVGPGT…HPHTPFPGGD (77 aa). Residues 424–450 are compositionally biased toward pro residues; sequence PQQPAPGEPSTPAPAPMPPTPQHPHTP.

The protein belongs to the peptidase S8 family.

It localises to the secreted. Functionally, secreted subtilisin-like serine protease with keratinolytic activity that contributes to pathogenicity. This Arthroderma gypseum (strain ATCC MYA-4604 / CBS 118893) (Microsporum gypseum) protein is Subtilisin-like protease 1 (SUB1).